Reading from the N-terminus, the 225-residue chain is Small ribosomal subunit protein L51-b (225 aa).

The transit peptide at 1-84 (MKFPDLLRCS…QCAFISSDRF (84 aa)) directs the protein to the mitochondrion.

This sequence belongs to the bacterial ribosomal protein bS1 family. As to quaternary structure, component of the mitochondrial small ribosomal subunit (mt-SSU). Mature yeast 74S mitochondrial ribosomes consist of a small (37S) and a large (54S) subunit. The 37S small subunit contains a 15S ribosomal RNA (15S mt-rRNA) and at least 32 different proteins. The 54S large subunit contains a 21S rRNA (21S mt-rRNA) and at least 45 different proteins. This subunit is mutually exclusive with mrp51/small ribosomal subunit protein bS1m.

It localises to the mitochondrion. Component of the mitochondrial ribosome (mitoribosome), a dedicated translation machinery responsible for the synthesis of mitochondrial genome-encoded proteins, including at least some of the essential transmembrane subunits of the mitochondrial respiratory chain. The mitoribosomes are attached to the mitochondrial inner membrane and translation products are cotranslationally integrated into the membrane. Functionally interacts with the 5'-UTR of mitochondrial mRNAs. Specifically plays a role in the translation of cob1/cytochrome b and cox3. Has a role in meiosis. This chain is Small ribosomal subunit protein L51-b, found in Schizosaccharomyces pombe (strain 972 / ATCC 24843) (Fission yeast).